The chain runs to 1656 residues: MGIADGQRRRSSSLRTQMFNKHLYDKYRGRTDDEIELEDINESKTFSGSDNNDKDDRDETSGNYAAEEDYEMEEYGSPDVSYSIITKILDTILDRRRTFHSKDGRHIPIILDHNAIEYKQAATKRDGHLIDERFNKPYCDNRITSSRYTFYSFLPRQLYAQFSKLANTYFFIVAVLQMIPGWSTTGTYTTIIPLCVFMGISMTREAWDDFRRHRLDKEENNKPVGVLVKDGNNDAQEVYTLPSSVVSSTAYLTKSAAAENNPPLNDDRNSSQGHFLDTHFNNFELLKNKYNVHIHQKKWEKLRVGDFVLLTQDDWVPADLLLLTCDGENSECFVETMALDGETNLKSKQPHPELNKLTKAASGLANINAQVTVEDPNIDLYNFEGNLELKNHRNDTIMKYPLGPDNVIYRGSILRNTQNVVGMVIFSGEETKIRMNALKNPRTKAPKLQRKINMIIVFMVFVVATISLFSYLGHVLHKKKYIDQNKAWYLFQADAGVAPTIMSFIIMYNTVIPLSLYVTMEIIKVVQSKMMEWDIDMYHAETNTPCESRTATILEELGQVSYIFSDKTGTLTDNKMIFRKFSLCGSSWLHNVDLGNSEDNFEDNRDNTNSLRLPPKAHNGSSIDVVSIGDQNVLDRLGFSDAPIEKGHRPSLDNFPKSRNSIEYKGNSSAIYTGRPSMRSLFGKDNSHLSKQASVISPSETFSENIKSSFDLIQFIQRYPTALFSQKAKFFFLSLALCHSCLPKKTHNESIGEDSIEYQSSSPDELALVTAARDLGYIVLNRNAQILTIKTFPDGFDGEAKLENYEILNYIDFNSQRKRMSVLVRMPNQPNQVLLICKGADNVIMERLHDRELAAKKMADICTSTKERKDAEAELVLQQRKSLERMVDEEAMARTSLRNSLSSVPRASLSLQAVRKSLSMKNSRTRDPEKQIDSIDQFLETVKKSDQEIGSVVNKSRKSLHKQQIEKYGPRISIDGTHFPNNNVPIDTRKEGLQHDYDTEILEHIGSDELILNEEYVIERTLQAIDEFSTEGLRTLVYAYKWIDIGQYENWNKRYHQAKTSLTDRKIKVDEAGAEIEDGLNLLGVTAIEDKLQDGVSEAIEKIRRAGIKMWMLTGDKRETAINIGYSCMLIKDYSTVVILTTTDENIISKMNAVSQEVDSGNIAHCVVVIDGATMAMFEGNPTYMSVFVELCTKTDSVICCRASPSQKALMVSNIRNTDPNLVTLAIGDGANDIAMIQSADIGVGIAGKEGLQASRVSDYSIGQFRFLLKLLFVHGRYNYIRTSKFMLCTFYKEITFYFTQLIYQRYTMFSGSSLYEPWSLSMFNTLFTSLPVLCIGMFEKDLKPMTLLTVPELYSYGRLSQGFNWLIFMEWVILATTNSLIITFLNVVMWGMSSLSDNTMYPLGLINFTAIVALINVKSQFVEMHNRNWLAFTSVVLSCGGWLVWCCALPILNNTDQIYDVAYGFYNHFGKDITFWCTSLVLALLPITLDIVYKTFKVMIWPSDSDIFAELEQKSDIRKKLELGAYSEMRQGWTWDKDPSTFTRYTDKVLSRPRTNSRASAKTHNSSIYSMSNGNVDHSSKKNFFGNSSKKSSERYEVLPSGKLIKRPSLKTQSSKDSIGGNITTKLTKKLKLPSRNVEDEDVNQIIQARLKDLE.

Residues 1 to 164 (MGIADGQRRR…PRQLYAQFSK (164 aa)) are Lumenal-facing. Residues 36 to 74 (ELEDINESKTFSGSDNNDKDDRDETSGNYAAEEDYEMEE) are disordered. The segment covering 51 to 60 (NNDKDDRDET) has biased composition (basic and acidic residues). A helical transmembrane segment spans residues 165–185 (LANTYFFIVAVLQMIPGWSTT). Residues 186 to 451 (GTYTTIIPLC…RTKAPKLQRK (266 aa)) are Cytoplasmic-facing. A helical membrane pass occupies residues 452–472 (INMIIVFMVFVVATISLFSYL). Residues 473-495 (GHVLHKKKYIDQNKAWYLFQADA) lie on the Lumenal side of the membrane. A helical transmembrane segment spans residues 496 to 516 (GVAPTIMSFIIMYNTVIPLSL). Residues 517 to 1157 (YVTMEIIKVV…ISKMNAVSQE (641 aa)) lie on the Cytoplasmic side of the membrane. Catalysis depends on Asp-566, which acts as the 4-aspartylphosphate intermediate. Residues Asp-566, Lys-567, and Thr-568 each contribute to the ATP site. Mg(2+) is bound at residue Asp-566. Residue Thr-568 coordinates Mg(2+). Ser-627 is modified (phosphoserine). ATP is bound by residues Glu-765, Phe-813, Ser-815, Lys-818, Lys-838, Arg-1034, Thr-1035, Thr-1114, Gly-1115, Asp-1116, 1167-1174 (VVVIDGAT), Arg-1202, and Lys-1208. A helical transmembrane segment spans residues 1158 to 1178 (VDSGNIAHCVVVIDGATMAMF). At 1179 to 1318 (EGNPTYMSVF…MFSGSSLYEP (140 aa)) the chain is on the lumenal side. Residue Asp-1229 coordinates Mg(2+). Residues Asn-1232 and Asp-1233 each coordinate ATP. A helical transmembrane segment spans residues 1319–1339 (WSLSMFNTLFTSLPVLCIGMF). The Cytoplasmic portion of the chain corresponds to 1340 to 1365 (EKDLKPMTLLTVPELYSYGRLSQGFN). The helical transmembrane segment at 1366-1386 (WLIFMEWVILATTNSLIITFL) threads the bilayer. The Lumenal portion of the chain corresponds to 1387–1395 (NVVMWGMSS). Residues 1396-1416 (LSDNTMYPLGLINFTAIVALI) traverse the membrane as a helical segment. Over 1417–1432 (NVKSQFVEMHNRNWLA) the chain is Cytoplasmic. A helical membrane pass occupies residues 1433–1453 (FTSVVLSCGGWLVWCCALPIL). Residues 1454 to 1473 (NNTDQIYDVAYGFYNHFGKD) are Lumenal-facing. The helical transmembrane segment at 1474-1494 (ITFWCTSLVLALLPITLDIVY) threads the bilayer. Residues 1495-1656 (KTFKVMIWPS…IIQARLKDLE (162 aa)) lie on the Cytoplasmic side of the membrane. Residues 1554-1576 (PRTNSRASAKTHNSSIYSMSNGN) are disordered.

Belongs to the cation transport ATPase (P-type) (TC 3.A.3) family. Type IV subfamily. In terms of assembly, component of a flippase complex consisting of DNF3 and YNR048W/CRF1. Interacts with YNR048W/CRF1; the interaction is direct and required for proper expression and endoplasmic reticulum (ER) export of either partner. Mg(2+) serves as cofactor.

The protein resides in the golgi apparatus. Its subcellular location is the trans-Golgi network membrane. It is found in the endosome membrane. It catalyses the reaction ATP + H2O + phospholipidSide 1 = ADP + phosphate + phospholipidSide 2.. The catalysed reaction is a 1,2-diacyl-sn-glycero-3-phosphocholine(out) + ATP + H2O = a 1,2-diacyl-sn-glycero-3-phosphocholine(in) + ADP + phosphate + H(+). The enzyme catalyses a 1,2-diacyl-sn-glycero-3-phosphoethanolamine(out) + ATP + H2O = a 1,2-diacyl-sn-glycero-3-phosphoethanolamine(in) + ADP + phosphate + H(+). Its function is as follows. Catalytic component of a P4-ATPase flippase complex which catalyzes the hydrolysis of ATP coupled to the transport of phosphatidylcholine and small amounts of phosphatidylethanolamine from the lumen to the cytosolic leaflet of the trans-Golgi network and ensures the maintenance of asymmetric distribution of phospholipids. May be involved in transport from early endosomes to the trans-Golgi network (TGN). This Saccharomyces cerevisiae (strain ATCC 204508 / S288c) (Baker's yeast) protein is Probable phospholipid-transporting ATPase DNF3 (DNF3).